Here is a 147-residue protein sequence, read N- to C-terminus: Cytochrome c-type biogenesis protein CcmE (147 aa).

Residues Met1–Arg9 lie on the Cytoplasmic side of the membrane. A helical; Signal-anchor for type II membrane protein transmembrane segment spans residues Ile10 to Ala30. Residues Met31 to Ser147 are Periplasmic-facing. Residues His123 and Tyr127 each coordinate heme.

It belongs to the CcmE/CycJ family.

It localises to the cell inner membrane. Its function is as follows. Heme chaperone required for the biogenesis of c-type cytochromes. Transiently binds heme delivered by CcmC and transfers the heme to apo-cytochromes in a process facilitated by CcmF and CcmH. This chain is Cytochrome c-type biogenesis protein CcmE, found in Ruegeria sp. (strain TM1040) (Silicibacter sp.).